Consider the following 376-residue polypeptide: S-adenosylmethionine synthase (376 aa).

Histidine 15 serves as a coordination point for ATP. Mg(2+) is bound at residue aspartate 17. Glutamate 43 contacts K(+). Glutamate 56 and glutamine 92 together coordinate L-methionine. The flexible loop stretch occupies residues glutamine 92–arginine 102. ATP contacts are provided by residues aspartate 156–lysine 158, aspartate 231, arginine 237–lysine 238, alanine 254, and lysine 258. Aspartate 231 lines the L-methionine pocket. Lysine 262 contributes to the L-methionine binding site.

The protein belongs to the AdoMet synthase family. Homotetramer; dimer of dimers. It depends on Mg(2+) as a cofactor. K(+) serves as cofactor.

It localises to the cytoplasm. The enzyme catalyses L-methionine + ATP + H2O = S-adenosyl-L-methionine + phosphate + diphosphate. It participates in amino-acid biosynthesis; S-adenosyl-L-methionine biosynthesis; S-adenosyl-L-methionine from L-methionine: step 1/1. Its function is as follows. Catalyzes the formation of S-adenosylmethionine (AdoMet) from methionine and ATP. The overall synthetic reaction is composed of two sequential steps, AdoMet formation and the subsequent tripolyphosphate hydrolysis which occurs prior to release of AdoMet from the enzyme. This Mycoplasmopsis pulmonis (strain UAB CTIP) (Mycoplasma pulmonis) protein is S-adenosylmethionine synthase.